The chain runs to 270 residues: 3-phenylpropionate-dihydrodiol/cinnamic acid-dihydrodiol dehydrogenase (270 aa).

10–34 (FITGGGSGLGLALVERFIEEGAQVA) provides a ligand contact to NAD(+). Serine 143 contacts substrate. Tyrosine 156 serves as the catalytic Proton acceptor.

This sequence belongs to the short-chain dehydrogenases/reductases (SDR) family.

The enzyme catalyses 3-(cis-5,6-dihydroxycyclohexa-1,3-dien-1-yl)propanoate + NAD(+) = 3-(2,3-dihydroxyphenyl)propanoate + NADH + H(+). It catalyses the reaction (2E)-3-(cis-5,6-dihydroxycyclohexa-1,3-dien-1-yl)prop-2-enoate + NAD(+) = (2E)-3-(2,3-dihydroxyphenyl)prop-2-enoate + NADH + H(+). It functions in the pathway aromatic compound metabolism; 3-phenylpropanoate degradation. Functionally, converts 3-phenylpropionate-dihydrodiol (PP-dihydrodiol) and cinnamic acid-dihydrodiol (CI-dihydrodiol) into 3-(2,3-dihydroxylphenyl)propanoic acid (DHPP) and 2,3-dihydroxicinnamic acid (DHCI), respectively. The sequence is that of 3-phenylpropionate-dihydrodiol/cinnamic acid-dihydrodiol dehydrogenase from Escherichia coli (strain K12 / MC4100 / BW2952).